We begin with the raw amino-acid sequence, 132 residues long: Small ribosomal subunit protein uS11 (132 aa).

The disordered stretch occupies residues 1 to 24 (MAAQKQAARKPRRRDRKSVPVGQA). Over residues 7-16 (AARKPRRRDR) the composition is skewed to basic residues.

The protein belongs to the universal ribosomal protein uS11 family. In terms of assembly, part of the 30S ribosomal subunit. Interacts with proteins S7 and S18. Binds to IF-3.

Functionally, located on the platform of the 30S subunit, it bridges several disparate RNA helices of the 16S rRNA. Forms part of the Shine-Dalgarno cleft in the 70S ribosome. This Bifidobacterium adolescentis (strain ATCC 15703 / DSM 20083 / NCTC 11814 / E194a) protein is Small ribosomal subunit protein uS11.